Consider the following 131-residue polypeptide: Profilin (131 aa).

The protein belongs to the profilin family. Occurs in many kinds of cells as a complex with monomeric actin in a 1:1 ratio.

The protein localises to the cytoplasm. It is found in the cytoskeleton. Binds to actin and affects the structure of the cytoskeleton. At high concentrations, profilin prevents the polymerization of actin, whereas it enhances it at low concentrations. By binding to PIP2, it inhibits the formation of IP3 and DG. The polypeptide is Profilin (Arachis hypogaea (Peanut)).